The primary structure comprises 436 residues: GTPase Der (436 aa).

2 EngA-type G domains span residues 4–167 (PTIA…PNTS) and 175–351 (IKFS…MNQN). GTP-binding positions include 10–17 (GRPNVGKS), 57–61 (DTGGI), 119–122 (NKVD), 181–188 (GRPNVGKS), 229–233 (DTAGM), and 294–297 (NKWD). Residues 352–436 (LRIPSALLND…PIKIIPRRRK (85 aa)) form the KH-like domain.

It belongs to the TRAFAC class TrmE-Era-EngA-EngB-Septin-like GTPase superfamily. EngA (Der) GTPase family. Associates with the 50S ribosomal subunit.

Its function is as follows. GTPase that plays an essential role in the late steps of ribosome biogenesis. This chain is GTPase Der, found in Enterococcus faecalis (strain ATCC 700802 / V583).